The sequence spans 180 residues: Protein GrpE (180 aa).

A compositionally biased stretch (basic and acidic residues) spans 1-19 (MAEKKRAQEQEKVQEDQKM). Positions 1-25 (MAEKKRAQEQEKVQEDQKMQNEQNE) are disordered.

This sequence belongs to the GrpE family. As to quaternary structure, homodimer.

Its subcellular location is the cytoplasm. In terms of biological role, participates actively in the response to hyperosmotic and heat shock by preventing the aggregation of stress-denatured proteins, in association with DnaK and GrpE. It is the nucleotide exchange factor for DnaK and may function as a thermosensor. Unfolded proteins bind initially to DnaJ; upon interaction with the DnaJ-bound protein, DnaK hydrolyzes its bound ATP, resulting in the formation of a stable complex. GrpE releases ADP from DnaK; ATP binding to DnaK triggers the release of the substrate protein, thus completing the reaction cycle. Several rounds of ATP-dependent interactions between DnaJ, DnaK and GrpE are required for fully efficient folding. The chain is Protein GrpE from Nitratiruptor sp. (strain SB155-2).